We begin with the raw amino-acid sequence, 103 residues long: Pyrimidine/purine nucleoside phosphorylase (103 aa).

It belongs to the nucleoside phosphorylase PpnP family.

It carries out the reaction a purine D-ribonucleoside + phosphate = a purine nucleobase + alpha-D-ribose 1-phosphate. The catalysed reaction is adenosine + phosphate = alpha-D-ribose 1-phosphate + adenine. It catalyses the reaction cytidine + phosphate = cytosine + alpha-D-ribose 1-phosphate. The enzyme catalyses guanosine + phosphate = alpha-D-ribose 1-phosphate + guanine. It carries out the reaction inosine + phosphate = alpha-D-ribose 1-phosphate + hypoxanthine. The catalysed reaction is thymidine + phosphate = 2-deoxy-alpha-D-ribose 1-phosphate + thymine. It catalyses the reaction uridine + phosphate = alpha-D-ribose 1-phosphate + uracil. The enzyme catalyses xanthosine + phosphate = alpha-D-ribose 1-phosphate + xanthine. In terms of biological role, catalyzes the phosphorolysis of diverse nucleosides, yielding D-ribose 1-phosphate and the respective free bases. Can use uridine, adenosine, guanosine, cytidine, thymidine, inosine and xanthosine as substrates. Also catalyzes the reverse reactions. In Geobacter sp. (strain M21), this protein is Pyrimidine/purine nucleoside phosphorylase.